The primary structure comprises 238 residues: Probable RNA/DNA demethylase ALKBH6 (238 aa).

In terms of domain architecture, Fe2OG dioxygenase spans 96 to 227; it reads PANHVLVNQY…RVSLTIRRVP (132 aa). Residues N103 and Y105 each contribute to the 2-oxoglutarate site. The Fe cation site is built by H114, D116, and H182. Positions 218 and 220 each coordinate 2-oxoglutarate.

It belongs to the alkB family. In terms of assembly, interacts with VCPKMT. It depends on Fe(2+) as a cofactor.

It localises to the cytoplasm. Its subcellular location is the nucleus. Functionally, probable Fe(2+)/2-oxoglutarate-dependent dioxygenase involved in oxidative demethylation of nucleic acids. Binds nucleic acids with a preference for ssDNA or ssRNA to other types of DNAs. May play a role in nucleic acid damage repair. The sequence is that of Probable RNA/DNA demethylase ALKBH6 (Alkbh6) from Mus musculus (Mouse).